The sequence spans 467 residues: Glutamate--tRNA ligase (467 aa).

Positions 10 to 20 match the 'HIGH' region motif; sequence PSPTGHLHIGG. Residues C99, C101, C126, and E128 each coordinate Zn(2+). The short motif at 236–240 is the 'KMSKS' region element; that stretch reads RLSKR. ATP is bound at residue K239.

This sequence belongs to the class-I aminoacyl-tRNA synthetase family. Glutamate--tRNA ligase type 1 subfamily. Monomer. The cofactor is Zn(2+).

The protein localises to the cytoplasm. It catalyses the reaction tRNA(Glu) + L-glutamate + ATP = L-glutamyl-tRNA(Glu) + AMP + diphosphate. Catalyzes the attachment of glutamate to tRNA(Glu) in a two-step reaction: glutamate is first activated by ATP to form Glu-AMP and then transferred to the acceptor end of tRNA(Glu). The polypeptide is Glutamate--tRNA ligase (Desulfosudis oleivorans (strain DSM 6200 / JCM 39069 / Hxd3) (Desulfococcus oleovorans)).